The primary structure comprises 161 residues: Anthrone oxygenase tpcL (161 aa).

N4 carries an N-linked (GlcNAc...) asparagine glycan. The next 4 membrane-spanning stretches (helical) occupy residues 15 to 35 (VITG…DIPV), 56 to 74 (IGHK…LYGY), 87 to 107 (LPHI…WLVM), and 136 to 155 (WAQL…VLGL).

It belongs to the anthrone oxygenase family. As to expression, specifically expressed in conidia.

The protein resides in the membrane. The enzyme catalyses emodin anthrone + O2 = emodin + H2O + H(+). It participates in secondary metabolite biosynthesis. Functionally, anthrone oxygenase; part of the gene cluster that mediates the biosynthesis of trypacidin, a mycotoxin with antiprotozoal activity and that plays a role in the infection process. The pathway begins with the synthesis of atrochrysone thioester by the polyketide synthase (PKS) tpcC. The atrochrysone carboxyl ACP thioesterase tpcB then breaks the thioester bond and releases the atrochrysone carboxylic acid from tpcC. The decarboxylase tpcK converts atrochrysone carboxylic acid to atrochrysone which is further reduced into emodin anthrone. The next step is performed by the emodin anthrone oxygenase tpcL that catalyzes the oxidation of emodinanthrone to emodin. Emodin O-methyltransferase encoded by tpcA catalyzes methylation of the 8-hydroxy group of emodin to form questin. Ring cleavage of questin by questin oxidase tpcI leads to desmethylsulochrin via several intermediates including questin epoxide. Another methylation step catalyzed by tpcM leads to the formation of sulochrin which is further converted to monomethylsulfochrin by tpcH. Finally, the tpcJ catalyzes the conversion of monomethylsulfochrin to trypacidin. Trypacidin is toxic for human pulmonary and bronchial epithelial cells by initiating the intracellular formation of nitric oxide (NO) and hydrogen peroxide (H(2)O(2)), thus triggering host necrotic cell death. The trypacidin pathway is also able to produce endocrocin via a distinct route from the endocrocin Enc pathway. This Aspergillus fumigatus (strain ATCC MYA-4609 / CBS 101355 / FGSC A1100 / Af293) (Neosartorya fumigata) protein is Anthrone oxygenase tpcL.